The following is a 122-amino-acid chain: MARIAGVNIPTNKRVLIALQYIHGIGQKSARDIVTKVGIDDARRVNQLTDAEVLAIRETIDKDFTVEGDLRRENSMNIKRLMDLACYRGLRHRKGLPVRGQRTHTNARTRKGPAKPIAGKKK.

Positions 95-122 (GLPVRGQRTHTNARTRKGPAKPIAGKKK) are disordered.

It belongs to the universal ribosomal protein uS13 family. As to quaternary structure, part of the 30S ribosomal subunit. Forms a loose heterodimer with protein S19. Forms two bridges to the 50S subunit in the 70S ribosome.

Located at the top of the head of the 30S subunit, it contacts several helices of the 16S rRNA. In the 70S ribosome it contacts the 23S rRNA (bridge B1a) and protein L5 of the 50S subunit (bridge B1b), connecting the 2 subunits; these bridges are implicated in subunit movement. Contacts the tRNAs in the A and P-sites. This Caulobacter sp. (strain K31) protein is Small ribosomal subunit protein uS13.